Here is a 282-residue protein sequence, read N- to C-terminus: Shikimate dehydrogenase (NADP(+)) (282 aa).

Residues 19–21 and T66 each bind shikimate; that span reads SFS. The active-site Proton acceptor is the K70. 2 residues coordinate shikimate: N91 and D106. NADP(+) is bound by residues 130 to 134, 152 to 157, T196, M200, and L224; these read GAGGA and NRTVEK. Residue Y226 participates in shikimate binding. G247 contributes to the NADP(+) binding site.

It belongs to the shikimate dehydrogenase family. In terms of assembly, homodimer.

It carries out the reaction shikimate + NADP(+) = 3-dehydroshikimate + NADPH + H(+). The protein operates within metabolic intermediate biosynthesis; chorismate biosynthesis; chorismate from D-erythrose 4-phosphate and phosphoenolpyruvate: step 4/7. Functionally, involved in the biosynthesis of the chorismate, which leads to the biosynthesis of aromatic amino acids. Catalyzes the reversible NADPH linked reduction of 3-dehydroshikimate (DHSA) to yield shikimate (SA). The sequence is that of Shikimate dehydrogenase (NADP(+)) from Methanocaldococcus jannaschii (strain ATCC 43067 / DSM 2661 / JAL-1 / JCM 10045 / NBRC 100440) (Methanococcus jannaschii).